The following is a 101-amino-acid chain: Floral defensin-like protein 2 (101 aa).

The signal sequence occupies residues 1-25 (MARSICFFAVAILALMLFAAYETEA). Intrachain disulfides connect Cys28-Cys74, Cys32-Cys48, Cys39-Cys61, Cys45-Cys68, and Cys49-Cys70. The propeptide at 75–101 (ATEEATATLANEVKTMAEALVEEDMME) is removed in mature form.

This sequence belongs to the DEFL family. Post-translationally, when compared to other plant defensins, the petunia defensins have an additional fifth disulfide bond. As to expression, petals.

It localises to the secreted. The protein localises to the vacuole. Its function is as follows. Plant defense peptide with antifungal activity against F.oxysporum and B.cinerea. This is Floral defensin-like protein 2 (D2) from Petunia hybrida (Petunia).